Consider the following 311-residue polypeptide: ATP synthase subunit a (311 aa).

A run of 6 helical transmembrane segments spans residues 62 to 82 (AVHV…GFIF), 123 to 143 (IAPM…MDLI), 170 to 190 (DPNA…MFSI), 213 to 233 (LWYL…VALI), 253 to 273 (IFIL…VGGV), and 276 to 296 (WAWA…FMVL).

Belongs to the ATPase A chain family. As to quaternary structure, F-type ATPases have 2 components, CF(1) - the catalytic core - and CF(0) - the membrane proton channel. CF(1) has five subunits: alpha(3), beta(3), gamma(1), delta(1), epsilon(1). CF(0) has three main subunits: a(1), b(2) and c(9-12). The alpha and beta chains form an alternating ring which encloses part of the gamma chain. CF(1) is attached to CF(0) by a central stalk formed by the gamma and epsilon chains, while a peripheral stalk is formed by the delta and b chains.

It localises to the cell inner membrane. Functionally, key component of the proton channel; it plays a direct role in the translocation of protons across the membrane. In Saccharophagus degradans (strain 2-40 / ATCC 43961 / DSM 17024), this protein is ATP synthase subunit a.